The sequence spans 371 residues: tRNA-specific 2-thiouridylase MnmA (371 aa).

Residues 16–23 (GMSGGVDS) and methionine 42 each bind ATP. The tract at residues 102–104 (NPD) is interaction with target base in tRNA. Cysteine 107 acts as the Nucleophile in catalysis. Cysteine 107 and cysteine 204 are disulfide-bonded. Position 132 (glycine 132) interacts with ATP. Residues 154 to 156 (KDQ) form an interaction with tRNA region. Residue cysteine 204 is the Cysteine persulfide intermediate of the active site. The segment at 316–317 (RY) is interaction with tRNA.

It belongs to the MnmA/TRMU family.

It localises to the cytoplasm. The catalysed reaction is S-sulfanyl-L-cysteinyl-[protein] + uridine(34) in tRNA + AH2 + ATP = 2-thiouridine(34) in tRNA + L-cysteinyl-[protein] + A + AMP + diphosphate + H(+). Its function is as follows. Catalyzes the 2-thiolation of uridine at the wobble position (U34) of tRNA, leading to the formation of s(2)U34. In Shewanella halifaxensis (strain HAW-EB4), this protein is tRNA-specific 2-thiouridylase MnmA.